The following is a 539-amino-acid chain: uncharacterized protein (539 aa).

2 disordered regions span residues 179–203 and 433–459; these read SDEL…HSHG and AQAS…HRDE. Residues 182–192 are compositionally biased toward acidic residues; sequence LLPDTGEDSDE. The segment covering 433–442 has biased composition (low complexity); it reads AQASARAQAR. Positions 443-455 are enriched in basic residues; that stretch reads AARRGRSAAKARG.

It belongs to the mycobacterial PPE family.

It localises to the secreted. This is an uncharacterized protein from Mycobacterium tuberculosis (strain CDC 1551 / Oshkosh).